A 266-amino-acid polypeptide reads, in one-letter code: Large ribosomal subunit protein eL8 (266 aa).

Residues K11, K20, and K21 each participate in a glycyl lysine isopeptide (Lys-Gly) (interchain with G-Cter in SUMO2) cross-link. Residue K34 is modified to N6-acetyllysine. K48 is covalently cross-linked (Glycyl lysine isopeptide (Lys-Gly) (interchain with G-Cter in SUMO2)). Residue K97 is modified to N6-acetyllysine; alternate. K97 participates in a covalent cross-link: Glycyl lysine isopeptide (Lys-Gly) (interchain with G-Cter in SUMO2); alternate. A Glycyl lysine isopeptide (Lys-Gly) (interchain with G-Cter in SUMO2) cross-link involves residue K125. Residue K217 is modified to N6-acetyllysine. K245 is covalently cross-linked (Glycyl lysine isopeptide (Lys-Gly) (interchain with G-Cter in SUMO2)).

It belongs to the eukaryotic ribosomal protein eL8 family. Component of the large ribosomal subunit. Interacts with CRY1. Interacts with DICER1, AGO2, TARBP2, MOV10 and EIF6; they form a large RNA-induced silencing complex (RISC).

It localises to the cytoplasm. Functionally, component of the large ribosomal subunit. The ribosome is a large ribonucleoprotein complex responsible for the synthesis of proteins in the cell. The chain is Large ribosomal subunit protein eL8 (Rpl7a) from Mus musculus (Mouse).